A 143-amino-acid polypeptide reads, in one-letter code: Submaxillary gland androgen-regulated protein 2, isoform delta (143 aa).

The signal sequence occupies residues 1-22; the sequence is MKPLCLVFGLCVLIGCFLSSEC. Disordered regions lie at residues 28-52 and 116-143; these read GQHD…PDPN and VPRK…TDSF. Polar residues-rich tracts occupy residues 36-45 and 122-143; these read LSPSNPSSHF and NATP…TDSF.

The protein resides in the secreted. In terms of biological role, may play a role in protection or detoxification. The chain is Submaxillary gland androgen-regulated protein 2, isoform delta (Smr2) from Mus musculus (Mouse).